Here is a 269-residue protein sequence, read N- to C-terminus: Regulatory protein RecX (269 aa).

It belongs to the RecX family.

Its subcellular location is the cytoplasm. Modulates RecA activity. In Listeria monocytogenes serotype 4b (strain CLIP80459), this protein is Regulatory protein RecX.